The primary structure comprises 318 residues: Thymidylate synthase (318 aa).

DUMP contacts are provided by residues arginine 25 and 180–181 (RR). The Nucleophile role is filled by cysteine 200. DUMP contacts are provided by residues 220-223 (RSGD), asparagine 231, and 261-263 (HIY). Residue aspartate 223 participates in (6R)-5,10-methylene-5,6,7,8-tetrahydrofolate binding. Alanine 317 contacts (6R)-5,10-methylene-5,6,7,8-tetrahydrofolate.

This sequence belongs to the thymidylate synthase family. Bacterial-type ThyA subfamily. In terms of assembly, homodimer.

It is found in the cytoplasm. The enzyme catalyses dUMP + (6R)-5,10-methylene-5,6,7,8-tetrahydrofolate = 7,8-dihydrofolate + dTMP. The protein operates within pyrimidine metabolism; dTTP biosynthesis. In terms of biological role, catalyzes the reductive methylation of 2'-deoxyuridine-5'-monophosphate (dUMP) to 2'-deoxythymidine-5'-monophosphate (dTMP) while utilizing 5,10-methylenetetrahydrofolate (mTHF) as the methyl donor and reductant in the reaction, yielding dihydrofolate (DHF) as a by-product. This enzymatic reaction provides an intracellular de novo source of dTMP, an essential precursor for DNA biosynthesis. In Bacillus cytotoxicus (strain DSM 22905 / CIP 110041 / 391-98 / NVH 391-98), this protein is Thymidylate synthase.